A 143-amino-acid polypeptide reads, in one-letter code: Cold shock domain-containing protein CG9705 (143 aa).

The disordered stretch occupies residues 1 to 30 (MTEPRTPEKLLAAKPPVLHHNSHSPNASLQ). Residues Ser-22, Ser-24, Ser-28, and Ser-33 each carry the phosphoserine modification. The CSD domain maps to 54–121 (VVTGMVKSFS…KHQAVHVQIS (68 aa)). Phosphoserine occurs at positions 139 and 140.

In Drosophila melanogaster (Fruit fly), this protein is Cold shock domain-containing protein CG9705.